A 260-amino-acid polypeptide reads, in one-letter code: Crotonyl-CoA hydratase (260 aa).

Glu114 functions as the Nucleophile in the catalytic mechanism. The active-site Proton acceptor is the Glu134.

Belongs to the enoyl-CoA hydratase/isomerase family. Homotetramer.

Its subcellular location is the cytoplasm. It carries out the reaction 3-hydroxybutanoyl-CoA = (2E)-butenoyl-CoA + H2O. The catalysed reaction is a short-chain (3S)-3-hydroxyacyl-CoA = a short-chain (2E)-enoyl-CoA + H2O. Its pathway is lipid metabolism; butanoate metabolism. In terms of biological role, involved in syntrophic growth of S.wolfei with butyrate, as part of the butyrate oxidation pathway. Probably catalyzes the hydration of crotonyl-CoA to 3-hydroxybutyryl-CoA. This is Crotonyl-CoA hydratase from Syntrophomonas wolfei subsp. wolfei (strain DSM 2245B / Goettingen).